We begin with the raw amino-acid sequence, 850 residues long: Receptor-like serine/threonine-protein kinase SD1-8 (850 aa).

The first 26 residues, 1 to 26, serve as a signal peptide directing secretion; the sequence is MRGLPNFYHSYTFFFFFLLILFPAYS. Residues 27–441 are Extracellular-facing; that stretch reads ISANTLSASE…LEDKRNRSAK (415 aa). Residues 31 to 153 enclose the Bulb-type lectin domain; sequence TLSASESLTI…KNSAPDGVLW (123 aa). Asparagine 43, asparagine 118, and asparagine 242 each carry an N-linked (GlcNAc...) asparagine glycan. One can recognise an EGF-like domain in the interval 292–328; the sequence is PKDQCDEYKECGVYGYCDSNTSPVCNCIKGFKPRNPQ. 4 disulfides stabilise this stretch: cysteine 296-cysteine 308, cysteine 302-cysteine 316, cysteine 378-cysteine 403, and cysteine 382-cysteine 388. The region spanning 347–428 is the PAN domain; sequence CGGGDGFVRL…GGQDLYVRLA (82 aa). N-linked (GlcNAc...) asparagine glycosylation is found at asparagine 387 and asparagine 437. A helical membrane pass occupies residues 442-462; sequence IIGSSIGVSVLLLLSFIIFFL. The Cytoplasmic portion of the chain corresponds to 463–850; it reads WKRKQKRSIL…QITVSVLDAR (388 aa). The Protein kinase domain maps to 526 to 807; that stretch reads FSNANKLGQG…LMLGSESTTI (282 aa). ATP contacts are provided by residues 532–540 and lysine 554; that span reads LGQGGFGIV. Residues 615-632 form a caM-binding region; sequence SRNSKLNWQMRFDIINGI. The active-site Proton acceptor is aspartate 651.

The protein belongs to the protein kinase superfamily. Ser/Thr protein kinase family. In terms of assembly, interacts with PUB9, PUB13, PUB14 and PUB38. As to expression, expressed in the root-hypocotyl transition zone, at the base of lateral roots, axillary buds and pedicels.

It localises to the cell membrane. The enzyme catalyses L-seryl-[protein] + ATP = O-phospho-L-seryl-[protein] + ADP + H(+). The catalysed reaction is L-threonyl-[protein] + ATP = O-phospho-L-threonyl-[protein] + ADP + H(+). Involved in the regulation of cellular expansion and differentiation. This is Receptor-like serine/threonine-protein kinase SD1-8 (SD18) from Arabidopsis thaliana (Mouse-ear cress).